The sequence spans 731 residues: Bifunctional trehalose-6-phosphate synthase/phosphatase (731 aa).

Residues 1–464 (MRLIVVSNRL…WGTDFIYSLI (464 aa)) form an alpha,alpha-trehalose-phosphate synthase region. Arg9 is a D-glucose 6-phosphate binding site. 25 to 26 (GG) provides a ligand contact to UDP-alpha-D-glucose. 2 residues coordinate D-glucose 6-phosphate: Tyr89 and Asp143. Arg276 and Lys281 together coordinate UDP-alpha-D-glucose. D-glucose 6-phosphate is bound at residue Arg314. 379–383 (LVAKE) is a UDP-alpha-D-glucose binding site. The tract at residues 465-731 (SAKSAREEVE…RSLLEQLRPP (267 aa)) is trehalose-6-phosphate phosphatase. The active-site Nucleophile is Asp503. The Mg(2+) site is built by Asp503, Asp505, and Asp684. Position 503–505 (503–505 (DYD)) interacts with alpha,alpha-trehalose 6-phosphate.

The protein in the N-terminal section; belongs to the glycosyltransferase 20 family. This sequence in the C-terminal section; belongs to the trehalose phosphatase family. As to quaternary structure, may interact with the putative glycosyltransferase (GT) TTX_1305. TTX_1305 is required for the trehalose-6-phosphate synthase activity of tpsp. Requires Mg(2+) as cofactor.

It catalyses the reaction D-glucose 6-phosphate + UDP-alpha-D-glucose = alpha,alpha-trehalose 6-phosphate + UDP + H(+). It carries out the reaction alpha,alpha-trehalose 6-phosphate + H2O = alpha,alpha-trehalose + phosphate. The protein operates within glycan biosynthesis; trehalose biosynthesis. Its function is as follows. Bifunctional enzyme which catalyzes the transfer of glucose from UDP-alpha-D-glucose to glucose-6-phosphate to form trehalose-6-phosphate (Tre6P) and removes the phosphate from Tre6P to produce free trehalose. The sequence is that of Bifunctional trehalose-6-phosphate synthase/phosphatase from Thermoproteus tenax (strain ATCC 35583 / DSM 2078 / JCM 9277 / NBRC 100435 / Kra 1).